The following is a 363-amino-acid chain: Probable methyltransferase-like protein 24 (363 aa).

Positions 1–38 are cleaved as a signal peptide; that stretch reads MGTAKPPGRGCGALPRWLLGAALLLGLRLCMELRHAGS. The segment at 37-62 is disordered; that stretch reads GSGPPGRRDLRGPPRTHLLPAPGPLR.

This sequence belongs to the methyltransferase superfamily.

It is found in the secreted. Probable methyltransferase. This is Probable methyltransferase-like protein 24 (Mettl24) from Rattus norvegicus (Rat).